We begin with the raw amino-acid sequence, 379 residues long: Cobalt-precorrin-5B C(1)-methyltransferase (379 aa).

This sequence belongs to the CbiD family.

The enzyme catalyses Co-precorrin-5B + S-adenosyl-L-methionine = Co-precorrin-6A + S-adenosyl-L-homocysteine. Its pathway is cofactor biosynthesis; adenosylcobalamin biosynthesis; cob(II)yrinate a,c-diamide from sirohydrochlorin (anaerobic route): step 6/10. Catalyzes the methylation of C-1 in cobalt-precorrin-5B to form cobalt-precorrin-6A. The protein is Cobalt-precorrin-5B C(1)-methyltransferase of Salmonella heidelberg (strain SL476).